The chain runs to 132 residues: HLA class I histocompatibility antigen protein P5 (132 aa).

Expressed in lymphoid tissues; Detected in spleen as well as in B-cell lines, NK cell lines and activated lymphocytes.

The sequence is that of HLA class I histocompatibility antigen protein P5 (HCP5) from Homo sapiens (Human).